Reading from the N-terminus, the 264-residue chain is Hydroxyethylthiazole kinase (264 aa).

Residue M47 coordinates substrate. ATP is bound by residues R123 and S169. Residue G196 coordinates substrate.

The protein belongs to the Thz kinase family. Mg(2+) serves as cofactor.

The enzyme catalyses 5-(2-hydroxyethyl)-4-methylthiazole + ATP = 4-methyl-5-(2-phosphooxyethyl)-thiazole + ADP + H(+). It participates in cofactor biosynthesis; thiamine diphosphate biosynthesis; 4-methyl-5-(2-phosphoethyl)-thiazole from 5-(2-hydroxyethyl)-4-methylthiazole: step 1/1. In terms of biological role, catalyzes the phosphorylation of the hydroxyl group of 4-methyl-5-beta-hydroxyethylthiazole (THZ). This Brachyspira hyodysenteriae (strain ATCC 49526 / WA1) protein is Hydroxyethylthiazole kinase.